A 442-amino-acid chain; its full sequence is Vacuolar zinc transporter ZRC1 (442 aa).

Residues 1-8 (MITGKELR) are Cytoplasmic-facing. The chain crosses the membrane as a helical span at residues 9–29 (IISLLTLDTVFFLLEITIGYM). Over 30–32 (SHS) the chain is Vacuolar. A helical membrane pass occupies residues 33–53 (LALIADSFHMLNDIISLLVAL). The Cytoplasmic segment spans residues 54 to 75 (WAVDVAKNRGPDAKYTYGWKRA). A helical transmembrane segment spans residues 76–96 (EILGALINAVFLIALCFSIMI). The Vacuolar portion of the chain corresponds to 97-112 (EALQRLIEPQEIQNPR). The helical transmembrane segment at 113–133 (LVLYVGVAGLISNVVGLFLFH) threads the bilayer. At 134-235 (DHGSDSLHSH…GHRSLNMHGV (102 aa)) the chain is on the cytoplasmic side. 3 short sequence motifs (histidine repeat) span residues 141-145 (HSHSH), 163-167 (HSHSH), and 216-220 (HDHSH). 2 disordered regions span residues 141–170 (HSHS…HASL) and 208–227 (QPLL…KPGH). Residues 149–170 (ESGNNDLDIESNATHSHSHASL) are compositionally biased toward polar residues. Basic and acidic residues predominate over residues 212 to 224 (NHDDHDHSHESKK). Residues 236-256 (FLHVLGDALGNIGVIAAALFI) form a helical membrane-spanning segment. The Vacuolar portion of the chain corresponds to 257 to 265 (WKTEYSWRY). The helical transmembrane segment at 266–286 (YSDPIVSLIITIIIFSSALPL) threads the bilayer. Topologically, residues 287–442 (SRRASRILLQ…AVNCNTSNCL (156 aa)) are cytoplasmic. Residue lysine 357 forms a Glycyl lysine isopeptide (Lys-Gly) (interchain with G-Cter in ubiquitin) linkage. Residues serine 387, serine 393, and serine 397 each carry the phosphoserine modification. A disordered region spans residues 391-419 (GGSPSSSQEAFDSHGNTEHGRKKRSPTAY).

This sequence belongs to the cation diffusion facilitator (CDF) transporter (TC 2.A.4) family. SLC30A subfamily.

The protein resides in the vacuole membrane. It carries out the reaction Zn(2+)(in) = Zn(2+)(out). In terms of biological role, vacuolar transporter that regulates zinc homeostasis by mediating zinc transport and storage into the vacuole. ZRC1 senses zinc availability in the cytosol, which might be performed through the histidine repeat motifs, and transports zinc from the cytosol to the vacuole if zinc in cytosol is abundant, conferring resistance to zinc toxicity. Plays a role in resistance to zinc shock resulting from sudden influx of zinc into cytoplasm when ZRT1 and ZRT2 are induced in response to zinc depletion. This Saccharomyces cerevisiae (strain ATCC 204508 / S288c) (Baker's yeast) protein is Vacuolar zinc transporter ZRC1.